A 631-amino-acid polypeptide reads, in one-letter code: RING finger protein 112 (631 aa).

The RING-type zinc finger occupies 57–98 (CSICLERLRDPISLDCGHDFCIRCFSTHRLPGCEPPCCPECR). The segment at 131–631 (PVRAEPLLLV…GDREPLLQEE (501 aa)) is interaction with ZBTB16. Residues 166-397 (DTPVCLLAVL…YVSDVLSAAP (232 aa)) form the GB1/RHD3-type G domain. 318–319 (RD) contributes to the GTP binding site. The next 2 membrane-spanning stretches (helical) occupy residues 547 to 567 (LAAVGGAVGAGLMGLAGGVVG) and 580 to 600 (GMVAAGAAVGATGAAVVGGGV).

It belongs to the TRAFAC class dynamin-like GTPase superfamily. GB1/RHD3 GTPase family. GB1 subfamily. Self-associates. Interacts with SP1 in an oxidative stress-regulated manner. Interacts with SIGMAR1 in an oxidative stress-regulated manner. Interacts with ZBTB16 (via C2H2-type zinc finger domains 1 and 2). Post-translationally, auto-ubiquitinated. In terms of tissue distribution, predominantly expressed in brain. Decreased expression in glioma brain tumors as compared to normal brains (at protein level).

It localises to the membrane. Its subcellular location is the cytoplasm. It is found in the nucleus. The protein resides in the nuclear body. The protein localises to the nucleoplasm. It localises to the endosome. Its subcellular location is the cytoplasmic vesicle. It is found in the secretory vesicle. The protein resides in the synaptic vesicle. The protein localises to the postsynaptic density. It localises to the perikaryon. Its subcellular location is the cell projection. It is found in the neuron projection. The enzyme catalyses S-ubiquitinyl-[E2 ubiquitin-conjugating enzyme]-L-cysteine + [acceptor protein]-L-lysine = [E2 ubiquitin-conjugating enzyme]-L-cysteine + N(6)-ubiquitinyl-[acceptor protein]-L-lysine.. The protein operates within protein modification; protein ubiquitination. Functionally, E3 ubiquitin-protein ligase that plays an important role in neuronal differentiation, including neurogenesis and gliogenesis, during brain development. During embryonic development initiates neuronal differentiation by inducing cell cycle arrest at the G0/G1 phase through up-regulation of cell-cycle regulatory proteins. Plays a role not only in the fetal period during the development of the nervous system, but also in the adult brain, where it is involved in the maintenance of neural functions and protection of the nervous tissue cells from oxidative stress-induced damage. Exhibits GTPase and E3 ubiquitin-protein ligase activities. Regulates dendritic spine density and synaptic neurotransmission; its ability to hydrolyze GTP is involved in the maintenance of dendritic spine density. The sequence is that of RING finger protein 112 (RNF112) from Homo sapiens (Human).